Here is a 651-residue protein sequence, read N- to C-terminus: Acetyl-coenzyme A synthetase (651 aa).

Residues 189-192 (RGGK), T311, and N335 each bind CoA. Residues 387-389 (GEP), 411-416 (DTWWQT), D500, and R515 each bind ATP. S523 provides a ligand contact to CoA. R526 lines the ATP pocket. Mg(2+) is bound by residues V537, H539, and V542. Position 584 (R584) interacts with CoA. At K609 the chain carries N6-acetyllysine.

It belongs to the ATP-dependent AMP-binding enzyme family. Mg(2+) is required as a cofactor. Acetylated. Deacetylation by the SIR2-homolog deacetylase activates the enzyme.

It carries out the reaction acetate + ATP + CoA = acetyl-CoA + AMP + diphosphate. In terms of biological role, catalyzes the conversion of acetate into acetyl-CoA (AcCoA), an essential intermediate at the junction of anabolic and catabolic pathways. AcsA undergoes a two-step reaction. In the first half reaction, AcsA combines acetate with ATP to form acetyl-adenylate (AcAMP) intermediate. In the second half reaction, it can then transfer the acetyl group from AcAMP to the sulfhydryl group of CoA, forming the product AcCoA. The sequence is that of Acetyl-coenzyme A synthetase from Rhizobium etli (strain ATCC 51251 / DSM 11541 / JCM 21823 / NBRC 15573 / CFN 42).